A 376-amino-acid polypeptide reads, in one-letter code: Succinyl-diaminopimelate desuccinylase (376 aa).

Residue H67 participates in Zn(2+) binding. Residue D69 is part of the active site. D100 provides a ligand contact to Zn(2+). Catalysis depends on E134, which acts as the Proton acceptor. The Zn(2+) site is built by E135, E163, and H349.

The protein belongs to the peptidase M20A family. DapE subfamily. As to quaternary structure, homodimer. Requires Zn(2+) as cofactor. Co(2+) serves as cofactor.

The catalysed reaction is N-succinyl-(2S,6S)-2,6-diaminopimelate + H2O = (2S,6S)-2,6-diaminopimelate + succinate. It participates in amino-acid biosynthesis; L-lysine biosynthesis via DAP pathway; LL-2,6-diaminopimelate from (S)-tetrahydrodipicolinate (succinylase route): step 3/3. In terms of biological role, catalyzes the hydrolysis of N-succinyl-L,L-diaminopimelic acid (SDAP), forming succinate and LL-2,6-diaminopimelate (DAP), an intermediate involved in the bacterial biosynthesis of lysine and meso-diaminopimelic acid, an essential component of bacterial cell walls. The chain is Succinyl-diaminopimelate desuccinylase from Xanthomonas campestris pv. campestris (strain B100).